Here is a 504-residue protein sequence, read N- to C-terminus: Probable chlorophyll(ide) b reductase NYC1, chloroplastic (504 aa).

The transit peptide at 1 to 33 (MAAAAVVHLSVHGRLRRSPELHARPYHRPSLLR) directs the protein to the chloroplast. The segment at 41 to 63 (ADNGGEEASSSPPPPTTAEARRR) is disordered. A run of 2 helical transmembrane segments spans residues 114 to 134 (YVIT…LSGG) and 141 to 161 (LIWY…ANSV). 175–199 (ITGSTRGLGKALAREFLLSGDRVVI) contributes to the NAD(+) binding site. Y339 (proton acceptor) is an active-site residue. The chain crosses the membrane as a helical span at residues 479-499 (WVSVFSLSVVCAFIILSSSGG).

Belongs to the short-chain dehydrogenases/reductases (SDR) family. Interacts with NOL to form a complex that acts as a chlorophyll b reductase. Expressed in leaves and stems. Also detected in non-photosynthetic tissues such as roots.

The protein localises to the plastid. It localises to the chloroplast thylakoid membrane. It catalyses the reaction 7(1)-hydroxychlorophyllide a + NAD(+) = chlorophyllide b + NADH + H(+). It carries out the reaction 7(1)-hydroxychlorophyllide a + NADP(+) = chlorophyllide b + NADPH + H(+). Required for proper chloroplast degradation. Involved in chlorophyll b degradation. The polypeptide is Probable chlorophyll(ide) b reductase NYC1, chloroplastic (NYC1) (Oryza sativa subsp. japonica (Rice)).